Here is a 247-residue protein sequence, read N- to C-terminus: 2,3-bisphosphoglycerate-dependent phosphoglycerate mutase (247 aa).

Substrate-binding positions include 8-15, 21-22, arginine 60, 87-90, lysine 98, 114-115, and 183-184; these read RHGESQWN, TG, ERHY, RR, and GN. Catalysis depends on histidine 9, which acts as the Tele-phosphohistidine intermediate. Catalysis depends on glutamate 87, which acts as the Proton donor/acceptor.

This sequence belongs to the phosphoglycerate mutase family. BPG-dependent PGAM subfamily.

The enzyme catalyses (2R)-2-phosphoglycerate = (2R)-3-phosphoglycerate. It participates in carbohydrate degradation; glycolysis; pyruvate from D-glyceraldehyde 3-phosphate: step 3/5. Catalyzes the interconversion of 2-phosphoglycerate and 3-phosphoglycerate. In Chlorobium chlorochromatii (strain CaD3), this protein is 2,3-bisphosphoglycerate-dependent phosphoglycerate mutase.